The following is a 223-amino-acid chain: Small ribosomal subunit protein uS3 (223 aa).

A KH type-2 domain is found at 39–108; sequence IRNFVKKNSY…NILINIVEVK (70 aa).

It belongs to the universal ribosomal protein uS3 family. Part of the 30S ribosomal subunit. Forms a tight complex with proteins S10 and S14.

Functionally, binds the lower part of the 30S subunit head. Binds mRNA in the 70S ribosome, positioning it for translation. In Clostridium botulinum (strain Okra / Type B1), this protein is Small ribosomal subunit protein uS3.